A 743-amino-acid polypeptide reads, in one-letter code: Protein STB5 (743 aa).

The zn(2)-C6 fungal-type DNA-binding region spans 22–49; sequence CARCRKLKKKCGKQIPTCANCDKNGAHC. 2 disordered regions span residues 81 to 100 and 155 to 249; these read VGKSPLSTKSMPNSSSPLSA and NSNP…YANN. 2 stretches are compositionally biased toward polar residues: residues 85-99 and 155-198; these read PLSTKSMPNSSSPLS and NSNP…SPLI. Residues 213-238 are compositionally biased toward low complexity; that stretch reads NNNRNTSNGDNGSNVNHDNNNGSTNT. Positions 239–249 are enriched in polar residues; it reads PQLSLTPYANN.

The protein resides in the nucleus. Its function is as follows. Binds to SIN3. This chain is Protein STB5 (STB5), found in Saccharomyces cerevisiae (strain ATCC 204508 / S288c) (Baker's yeast).